The chain runs to 122 residues: Large ribosomal subunit protein bL12 (122 aa).

Belongs to the bacterial ribosomal protein bL12 family. As to quaternary structure, homodimer. Part of the ribosomal stalk of the 50S ribosomal subunit. Forms a multimeric L10(L12)X complex, where L10 forms an elongated spine to which 2 to 4 L12 dimers bind in a sequential fashion. Binds GTP-bound translation factors.

In terms of biological role, forms part of the ribosomal stalk which helps the ribosome interact with GTP-bound translation factors. Is thus essential for accurate translation. This chain is Large ribosomal subunit protein bL12, found in Neisseria lactamica.